We begin with the raw amino-acid sequence, 94 residues long: Histone-like DNA-binding protein (94 aa).

This sequence belongs to the bacterial histone-like protein family.

The sequence is that of Histone-like DNA-binding protein from Rickettsia bellii (strain RML369-C).